Reading from the N-terminus, the 678-residue chain is UvrABC system protein C (678 aa).

Residues 16–95 (VEPGVYRFRD…IKEFDPRFNI (80 aa)) enclose the GIY-YIG domain. The 36-residue stretch at 208 to 243 (DRLIREMEQQMTAAAEDLDFERAARLRDNIGAMRRA) folds into the UVR domain. The segment covering 649–667 (EAPPEPGAEAPPDSGAAAA) has biased composition (low complexity). The interval 649-678 (EAPPEPGAEAPPDSGAAAAVMGNDQSRVPG) is disordered.

This sequence belongs to the UvrC family. In terms of assembly, interacts with UvrB in an incision complex.

The protein localises to the cytoplasm. The UvrABC repair system catalyzes the recognition and processing of DNA lesions. UvrC both incises the 5' and 3' sides of the lesion. The N-terminal half is responsible for the 3' incision and the C-terminal half is responsible for the 5' incision. This is UvrABC system protein C from Mycolicibacterium gilvum (strain PYR-GCK) (Mycobacterium gilvum (strain PYR-GCK)).